The primary structure comprises 125 residues: Small ribosomal subunit protein uS12 (125 aa).

At D89 the chain carries 3-methylthioaspartic acid.

The protein belongs to the universal ribosomal protein uS12 family. As to quaternary structure, part of the 30S ribosomal subunit. Contacts proteins S8 and S17. May interact with IF1 in the 30S initiation complex.

With S4 and S5 plays an important role in translational accuracy. In terms of biological role, interacts with and stabilizes bases of the 16S rRNA that are involved in tRNA selection in the A site and with the mRNA backbone. Located at the interface of the 30S and 50S subunits, it traverses the body of the 30S subunit contacting proteins on the other side and probably holding the rRNA structure together. The combined cluster of proteins S8, S12 and S17 appears to hold together the shoulder and platform of the 30S subunit. In Clostridium botulinum (strain Alaska E43 / Type E3), this protein is Small ribosomal subunit protein uS12.